The primary structure comprises 529 residues: Beta-hexosaminidase subunit alpha (529 aa).

An N-terminal signal peptide occupies residues 1–22; the sequence is MAGSTLRFSLLLAAAFAGRATA. Positions 23 to 88 are excised as a propeptide; that stretch reads LWPWPQYIQT…RFPHPIEKRH (66 aa). C58 and C104 are joined by a disulfide. N-linked (GlcNAc...) asparagine glycans are attached at residues N115, N157, and N295. A disulfide bridge links C277 with C328. E323 serves as the catalytic Proton donor. The interval 423–424 is critical for hydrolysis GM2 gangliosides; it reads NH. C505 and C522 are disulfide-bonded.

It belongs to the glycosyl hydrolase 20 family. There are 3 beta-hexosaminidase isozymes: isozyme A (hexosaminidase A) is a heterodimer composed of one subunit alpha and one subunit beta (chain A and B); isozyme B (hexosaminidase B) is a homodimer of two beta subunits (two chains A and B); isozyme S (hexosaminidase S) is a homodimer of two alpha subunits. The composition of the dimer (isozyme A versus isozyme S) has a significant effect on the substrate specificity of the alpha subunit active site.

It localises to the lysosome. It carries out the reaction Hydrolysis of terminal non-reducing N-acetyl-D-hexosamine residues in N-acetyl-beta-D-hexosaminides.. It catalyses the reaction N-acetyl-beta-D-galactosaminyl-(1-&gt;4)-beta-D-3-sulfogalactosyl-(1-&gt;4)-beta-D-glucosyl-(1&lt;-&gt;1')-ceramide + H2O = a beta-D-3-sulfogalactosyl-(1-&gt;4)-beta-D-glucosyl-(1&lt;-&gt;1')-ceramide + N-acetyl-beta-D-galactosamine. The enzyme catalyses a ganglioside GM2 (d18:1(4E)) + H2O = a ganglioside GM3 (d18:1(4E)) + N-acetyl-beta-D-galactosamine. The catalysed reaction is a ganglioside GM2 + H2O = a ganglioside GM3 + N-acetyl-beta-D-galactosamine. It carries out the reaction beta-D-GalNAc-(1-&gt;4)-alpha-L-IdoA-(1-&gt;3)-beta-D-GalNAc-4-sulfate-(1-&gt;4)-alpha-L-IdoA-(1-&gt;3)-D-GalNAc-4-sulfate + H2O = alpha-L-IdoA-(1-&gt;3)-beta-D-GalNAc-4-sulfate-(1-&gt;4)-alpha-L-IdoA-(1-&gt;3)-D-GalNAc-4-sulfate + N-acetyl-D-galactosamine. It catalyses the reaction N-acetyl-beta-D-6-sulfogalactosaminyl-(1-&gt;4)-alpha-L-iduronyl-(1-&gt;3)-N-acetyl-D-6-sulfogalactosamine + H2O = alpha-L-iduronyl-(1-&gt;3)-N-acetyl-D-6-sulfogalactosamine + N-acetyl-D-6-sulfogalactosamine. With respect to regulation, addition of GM2A stimulates the hydrolysis of sulfated glycosphingolipid SM2 and the ganglioside GM2. In terms of biological role, hydrolyzes the non-reducing end N-acetyl-D-hexosamine and/or sulfated N-acetyl-D-hexosamine of glycoconjugates, such as the oligosaccharide moieties from proteins and neutral glycolipids, or from certain mucopolysaccharides. The isozyme S is as active as the isozyme A on the anionic bis-sulfated glycans, the chondroitin-6-sulfate trisaccharide (C6S-3), and the dermatan sulfate pentasaccharide, and the sulfated glycosphingolipid SM2. The isozyme B does not hydrolyze each of these substrates, however hydrolyzes efficiently neutral oligosaccharide. Only the isozyme A is responsible for the degradation of GM2 gangliosides in the presence of GM2A. This Bos taurus (Bovine) protein is Beta-hexosaminidase subunit alpha.